The primary structure comprises 77 residues: Chassatide C2 (77 aa).

The signal sequence occupies residues 1–24; it reads MAKFANYLMLFLLVASLVMLEAQS. The propeptide at 25–44 is removed in mature form; the sequence is SDTIKVPDLGKRLLMNRDPN. Positions 45 to 75 form a cross-link, cyclopeptide (Gly-Asn); sequence GIPCAESCVWIPCTITALMGCSCKNNVCYNN. Intrachain disulfides connect Cys48–Cys65, Cys52–Cys67, and Cys57–Cys72. Met63 carries the methionine sulfoxide; in form chassatide chaC2A modification. A propeptide spans 76–77 (removed in mature form); it reads EL.

Belongs to the cyclotide family. Bracelet subfamily. Post-translationally, this is a cyclic peptide. Expressed in fruit, pedicel and stem but not in leaf and root (at protein level).

In terms of biological role, chassatide C2: Probably participates in a plant defense mechanism. Has no activity against bacteria up to a concentration of 80 uM. Has cytotoxic but no hemolytic activity. Chassatide C2A: Probably participates in a plant defense mechanism. Has no activity against bacteria up to a concentration of 80 uM. Has no cytotoxic and no hemolytic activity. This Chassalia chartacea (Chassalia curviflora) protein is Chassatide C2.